The primary structure comprises 492 residues: MDAEALRNLYLSSILPNESKTGNESPEKKFSSPVLLQRAKVIPLRLEYEERKLLHLLTAALDVSDYTDSVDTLSFSSPAKRLAQQLKGITAVLSGIMVAYDYKVGQELLEHKNFEQHAEFFKKIFEIGRRYKVLNPNRLGSTYGKLMYFVQDSMRPEIQDALGFNLFKPILTVYEFLNERDALNALEDPYAEIATMEIVAENRSRSAIQKDIKAKERAVEHIAKKYYSSKITKEKVRWCLYSIADSNSYLRYNRDPIAKLIGLVEAYFSPDTVDDEFTLAIDAINGSRLKHSHYKQYHYVVQSLHLWLLIMGEIFSLWALSDLELTNPDMEYKLIDNNQGIHRMQPCPNIRIAMERILRTAQEQSETWIGSSTIHLGDTAVPNALLFIDKYMQVPRILTPLVLLFKELDSLNDHSLLNYIDTAFGGREYLKKTILTDFMRFGFDGSGADNWFDAGSCIDGRLTSAWNWANNIHTKDYYRVLLMSGFLSFNGE.

The protein belongs to the UPF0652 family.

The protein resides in the cytoplasm. It is found in the nucleus. In Schizosaccharomyces pombe (strain 972 / ATCC 24843) (Fission yeast), this protein is UPF0652 protein C22H10.08.